Reading from the N-terminus, the 523-residue chain is Excitatory amino acid transporter 3 (523 aa).

At 1–18 (MGKPTSSGCDWRRFLRNH) the chain is on the cytoplasmic side. The chain crosses the membrane as a helical span at residues 19-38 (WLLLSTVAAVVLGIVLGVVV). Residues 39-61 (RGHSELSNLDKFYFAFPGEILMR) lie on the Extracellular side of the membrane. A helical transmembrane segment spans residues 62-82 (MLKLVILPLIVSSMITGVAAL). At 83–93 (DSNVSGKIGLR) the chain is on the cytoplasmic side. The helical transmembrane segment at 94–114 (AVVYYFSTTVIAVILGIVLVV) threads the bilayer. Na(+)-binding residues include Tyr98, Thr101, and Thr102. Over 115 to 204 (SIKPGVTQKV…KTKEYKIVGL (90 aa)) the chain is Extracellular. Residues Asn128, Asn178, and Asn194 are each glycosylated (N-linked (GlcNAc...) asparagine). A helical membrane pass occupies residues 205-228 (YSDGINVLGLIIFCLVFGLVIGKM). The Cytoplasmic portion of the chain corresponds to 229–237 (GEKGQILVD). A helical membrane pass occupies residues 238–265 (FFNALSDATMKIVQIIMCYMPIGILFLI). Over 266-285 (AGKIIEVEDWEIFRKLGLYM) the chain is Extracellular. Residues 286–307 (ATVLSGLAIHSLIVLPLLYFIV) form a helical membrane-spanning segment. Residues 308–312 (VRKNP) are Cytoplasmic-facing. An intramembrane region (discontinuously helical) is located at residues 313 to 343 (FRFALGMAQALLTALMISSSSATLPVTFRCA). L-aspartate-binding residues include Ser330 and Ser332. Residues 344 to 352 (EEKNQVDKR) lie on the Cytoplasmic side of the membrane. A helical membrane pass occupies residues 353–379 (ITRFVLPVGATINMDGTALYEAVAAVF). Positions 361, 363, 365, and 367 each coordinate Na(+). Residue Thr369 participates in L-aspartate binding. The Extracellular segment spans residues 380 to 392 (IAQLNGLDLSIGQ). Residues 393 to 426 (IVTISITATAASIGAAGVPQAGLVTMVIVLSAVG) constitute an intramembrane region (discontinuously helical). Ser404, Ile405, and Ala407 together coordinate Na(+). Residue Val410 participates in L-aspartate binding. Residues 427 to 439 (LPAEDVTLIIAVD) are Extracellular-facing. Residues 440-461 (WLLDRFRTMVNVLGDAFGTGIV) traverse the membrane as a helical segment. Arg446, Thr447, and Asn450 together coordinate L-aspartate. Na(+) contacts are provided by Asn450 and Asp454. Residues 462 to 523 (EKLSKKELEQ…TISFTQTSQF (62 aa)) are Cytoplasmic-facing. Phosphoserine occurs at positions 516 and 521.

The protein belongs to the dicarboxylate/amino acid:cation symporter (DAACS) (TC 2.A.23) family. SLC1A1 subfamily. In terms of assembly, homotrimer. Interacts with ARL6IP5. Interacts with RTN2 (via N-terminus); the interaction promotes cell surface expression of SLC1A1. Interacts with SORCS2; this interaction is important for normal expression at the cell membrane. In terms of tissue distribution, detected on neurons in the brain cortex, dentate gyrus and hippocampus CA2 region (at protein level). Expressed in whole brain, brain cortex, hippocampus, cerebellum, lung, kidney, small intestine and skeletal muscle. Expressed in the renal outer medulla, medullary ray and cortex (at protein level).

The protein localises to the cell membrane. It is found in the apical cell membrane. The protein resides in the synapse. Its subcellular location is the synaptosome. It localises to the early endosome membrane. The protein localises to the late endosome membrane. It is found in the recycling endosome membrane. The catalysed reaction is K(+)(in) + L-glutamate(out) + 3 Na(+)(out) + H(+)(out) = K(+)(out) + L-glutamate(in) + 3 Na(+)(in) + H(+)(in). The enzyme catalyses K(+)(in) + L-aspartate(out) + 3 Na(+)(out) + H(+)(out) = K(+)(out) + L-aspartate(in) + 3 Na(+)(in) + H(+)(in). It carries out the reaction D-aspartate(out) + K(+)(in) + 3 Na(+)(out) + H(+)(out) = D-aspartate(in) + K(+)(out) + 3 Na(+)(in) + H(+)(in). It catalyses the reaction K(+)(in) + L-cysteine(out) + 3 Na(+)(out) + H(+)(out) = K(+)(out) + L-cysteine(in) + 3 Na(+)(in) + H(+)(in). Functionally, sodium-dependent, high-affinity amino acid transporter that mediates the uptake of L-glutamate and also L-aspartate and D-aspartate. Can also transport L-cysteine. Functions as a symporter that transports one amino acid molecule together with two or three Na(+) ions and one proton, in parallel with the counter-transport of one K(+) ion. Mediates Cl(-) flux that is not coupled to amino acid transport; this avoids the accumulation of negative charges due to aspartate and Na(+) symport. Plays an important role in L-glutamate and L-aspartate reabsorption in renal tubuli. Plays a redundant role in the rapid removal of released glutamate from the synaptic cleft, which is essential for terminating the postsynaptic action of glutamate. Contributes to glutathione biosynthesis and protection against oxidative stress via its role in L-glutamate and L-cysteine transport. Negatively regulated by ARL6IP5. The protein is Excitatory amino acid transporter 3 (Slc1a1) of Mus musculus (Mouse).